Here is a 598-residue protein sequence, read N- to C-terminus: Arginine--tRNA ligase (598 aa).

A 'HIGH' region motif is present at residues 131 to 141; the sequence is ANPTGPMHVGH. Residues 288–309 are disordered; that stretch reads KLPPPKSKKGQPPPQPQPDEEG.

The protein belongs to the class-I aminoacyl-tRNA synthetase family. In terms of assembly, monomer.

The protein resides in the cytoplasm. The catalysed reaction is tRNA(Arg) + L-arginine + ATP = L-arginyl-tRNA(Arg) + AMP + diphosphate. The chain is Arginine--tRNA ligase from Anaeromyxobacter dehalogenans (strain 2CP-1 / ATCC BAA-258).